A 102-amino-acid polypeptide reads, in one-letter code: Large ribosomal subunit protein bL21 (102 aa).

It belongs to the bacterial ribosomal protein bL21 family. In terms of assembly, part of the 50S ribosomal subunit. Contacts protein L20.

In terms of biological role, this protein binds to 23S rRNA in the presence of protein L20. The protein is Large ribosomal subunit protein bL21 of Geobacillus thermodenitrificans (strain NG80-2).